Consider the following 847-residue polypeptide: Alanine--tRNA ligase (847 aa).

Positions 554, 558, 656, and 660 each coordinate Zn(2+).

The protein belongs to the class-II aminoacyl-tRNA synthetase family. Requires Zn(2+) as cofactor.

The protein resides in the cytoplasm. The catalysed reaction is tRNA(Ala) + L-alanine + ATP = L-alanyl-tRNA(Ala) + AMP + diphosphate. In terms of biological role, catalyzes the attachment of alanine to tRNA(Ala) in a two-step reaction: alanine is first activated by ATP to form Ala-AMP and then transferred to the acceptor end of tRNA(Ala). Also edits incorrectly charged Ser-tRNA(Ala) and Gly-tRNA(Ala) via its editing domain. This chain is Alanine--tRNA ligase, found in Helicobacter acinonychis (strain Sheeba).